Consider the following 244-residue polypeptide: Ureidoacrylate amidohydrolase RutB (244 aa).

D38 (proton acceptor) is an active-site residue. Residue K147 is part of the active site. The active-site Nucleophile is the C180.

It belongs to the isochorismatase family. RutB subfamily.

It carries out the reaction (Z)-3-ureidoacrylate + H2O + H(+) = (Z)-3-aminoacrylate + NH4(+) + CO2. It catalyses the reaction (Z)-3-ureidoacrylate + H2O = (Z)-3-aminoacrylate + carbamate + H(+). The enzyme catalyses (Z)-2-methylureidoacrylate + H2O + H(+) = (Z)-2-methylaminoacrylate + NH4(+) + CO2. In terms of biological role, hydrolyzes ureidoacrylate to form aminoacrylate and carbamate. The carbamate hydrolyzes spontaneously, thereby releasing one of the nitrogen atoms of the pyrimidine ring as ammonia and one of its carbon atoms as CO2. The polypeptide is Ureidoacrylate amidohydrolase RutB (Escherichia coli O1:K1 / APEC).